A 216-amino-acid chain; its full sequence is Redox-sensing transcriptional repressor Rex (216 aa).

Residues 20–59 (QYYRLFKSLVEENVTRTNSQLISEKIGVDAATIRRDFSLF) constitute a DNA-binding region (H-T-H motif). Residue 94–99 (GVGNLG) coordinates NAD(+).

It belongs to the transcriptional regulatory Rex family. In terms of assembly, homodimer.

It localises to the cytoplasm. Its function is as follows. Modulates transcription in response to changes in cellular NADH/NAD(+) redox state. This is Redox-sensing transcriptional repressor Rex from Lactococcus lactis subsp. cremoris (strain SK11).